The following is a 562-amino-acid chain: Solute carrier family 22 member 6 (562 aa).

At 1 to 15 (MPFSELLEQVGSTGR) the chain is on the cytoplasmic side. The helical transmembrane segment at 16 to 36 (FQVLHVTLLCIPVLMMASHNL) threads the bilayer. The Extracellular segment spans residues 37–147 (LQNFVATVPS…LVCDMHSFKQ (111 aa)). A helical transmembrane segment spans residues 148–168 (MGQTIYMGGVLVGALLFGGLS). The Cytoplasmic portion of the chain corresponds to 169-174 (DRYGRR). The chain crosses the membrane as a helical span at residues 175–195 (ILLLISNLLMAVSGTCAAFSS). Topologically, residues 196 to 205 (SFSLFCVFRF) are extracellular. The chain crosses the membrane as a helical span at residues 206-226 (GCGLALSGLGLNTFSLIVEWI). Over 227 to 235 (PTRIRTAVG) the chain is Cytoplasmic. A helical transmembrane segment spans residues 236 to 256 (TTTGYCYTLGQLILVLLAYFI). Topologically, residues 257 to 260 (RDWR) are extracellular. Residues 261–281 (WLTLAVSLPFYVFFLIAWWFH) form a helical membrane-spanning segment. Residues 282 to 351 (ESSRWLALSN…FNTPAMRKRT (70 aa)) lie on the Cytoplasmic side of the membrane. Residues 352–372 (LCLSAVWLSTSFAYYGLAMDL) traverse the membrane as a helical segment. The Extracellular segment spans residues 373-378 (DKFGVD). The chain crosses the membrane as a helical span at residues 379 to 399 (IYLIQVIFGAVDIPAKVVVVV). Over 400–408 (SMSLIGRRR) the chain is Cytoplasmic. Residues 409–429 (SQCAVLVVAGITILLNLLVPY) form a helical membrane-spanning segment. Over 430–444 (DKQTIRTCLAVLGKG) the chain is Extracellular. Residues 445-465 (CLAASFNCCYLYSGELFPTII) traverse the membrane as a helical segment. At 466–468 (RQN) the chain is on the cytoplasmic side. A helical membrane pass occupies residues 469–489 (GMGWVSMMARIGAMVAPMVLL). At 490–495 (TRDYIP) the chain is on the extracellular side. Residues 496–516 (WLPGLIYGGAPILSGLAAIFL) traverse the membrane as a helical segment. The Cytoplasmic segment spans residues 517 to 562 (PETLGYPLPDTIQDVEESGSGRKSKMSTKETITLQDKQANLLKQSA).

Belongs to the major facilitator (TC 2.A.1) superfamily. Organic cation transporter (TC 2.A.1.19) family. In terms of processing, glycosylated. Glycosylation is necessary for proper targeting of the transporter to the plasma membrane.

The protein localises to the cell membrane. It localises to the basolateral cell membrane. Its subcellular location is the basal cell membrane. Functionally, involved in the renal elimination of endogenous and exogenous organic anions. Functions as organic anion exchanger when the uptake of one molecule of organic anion is coupled with an efflux of one molecule of endogenous dicarboxylic acid (glutarate, ketoglutarate, etc). Mediates the sodium-independent uptake of p-aminohippurate (PAH), 2,3-dimercapto-1-propanesulfonic acid (DMPS), cidofovir, adefovir, 9-(2-phosphonylmethoxyethyl) guanine (PMEG), 9-(2-phosphonylmethoxyethyl) diaminopurine (PMEDAP), ochratoxin (OTA), acyclovir (ACV), 3'-azido-3-'deoxythymidine (AZT), cimetidine (CMD), 2,4-dichloro-phenoxyacetate (2,4-D), hippurate (HA), indoleacetate (IA), indoxyl sulfate (IS), 3-carboxy-4-methyl-5-propyl-2-furanpropionate (CMPF) and edaravone sulfate. Mediates the sodium-independent uptake of p-aminohippurate (PAH). PAH uptake is inhibited by p-chloromercuribenzenesulphonate (PCMBS), diethyl pyrocarbonate (DEPC), indomethacin, sulindac, diclofenac, carprofen, okadaic acid, benzothiazolylcysteine (BTC), S-chlorotrifluoroethylcysteine (CTFC), cysteine S-conjugates S-dichlorovinylcysteine (DCVC), furosemide, steviol, phorbol 12-myristate 13-acetate (PMA), calcium ionophore A23187, benzylpenicillin, bumetamide, losartan, probenecid, phenol red, urate, glutarate and alpha-ketoglutarate. PAH uptake is inhibited by glutarate. This Pseudopleuronectes americanus (Winter flounder) protein is Solute carrier family 22 member 6 (SLC22A6).